The following is a 328-amino-acid chain: 4-hydroxy-3-methylbut-2-enyl diphosphate reductase (328 aa).

Residue Cys13 coordinates [4Fe-4S] cluster. The (2E)-4-hydroxy-3-methylbut-2-enyl diphosphate site is built by His41 and His75. Positions 41 and 75 each coordinate dimethylallyl diphosphate. Isopentenyl diphosphate-binding residues include His41 and His75. Cys97 provides a ligand contact to [4Fe-4S] cluster. His125 lines the (2E)-4-hydroxy-3-methylbut-2-enyl diphosphate pocket. Dimethylallyl diphosphate is bound at residue His125. Residue His125 participates in isopentenyl diphosphate binding. Glu127 (proton donor) is an active-site residue. Residue Thr168 participates in (2E)-4-hydroxy-3-methylbut-2-enyl diphosphate binding. Cys225 serves as a coordination point for [4Fe-4S] cluster. 4 residues coordinate (2E)-4-hydroxy-3-methylbut-2-enyl diphosphate: Ser253, Ser254, Asn255, and Ser302. Dimethylallyl diphosphate-binding residues include Ser253, Ser254, Asn255, and Ser302. Positions 253, 254, 255, and 302 each coordinate isopentenyl diphosphate.

The protein belongs to the IspH family. The cofactor is [4Fe-4S] cluster.

The catalysed reaction is isopentenyl diphosphate + 2 oxidized [2Fe-2S]-[ferredoxin] + H2O = (2E)-4-hydroxy-3-methylbut-2-enyl diphosphate + 2 reduced [2Fe-2S]-[ferredoxin] + 2 H(+). It carries out the reaction dimethylallyl diphosphate + 2 oxidized [2Fe-2S]-[ferredoxin] + H2O = (2E)-4-hydroxy-3-methylbut-2-enyl diphosphate + 2 reduced [2Fe-2S]-[ferredoxin] + 2 H(+). The protein operates within isoprenoid biosynthesis; dimethylallyl diphosphate biosynthesis; dimethylallyl diphosphate from (2E)-4-hydroxy-3-methylbutenyl diphosphate: step 1/1. It functions in the pathway isoprenoid biosynthesis; isopentenyl diphosphate biosynthesis via DXP pathway; isopentenyl diphosphate from 1-deoxy-D-xylulose 5-phosphate: step 6/6. Catalyzes the conversion of 1-hydroxy-2-methyl-2-(E)-butenyl 4-diphosphate (HMBPP) into a mixture of isopentenyl diphosphate (IPP) and dimethylallyl diphosphate (DMAPP). Acts in the terminal step of the DOXP/MEP pathway for isoprenoid precursor biosynthesis. This Chlorobium chlorochromatii (strain CaD3) protein is 4-hydroxy-3-methylbut-2-enyl diphosphate reductase.